A 180-amino-acid chain; its full sequence is Crossover junction endodeoxyribonuclease RuvC (180 aa).

Catalysis depends on residues Asp7, Glu66, and Asp138. Positions 7, 66, and 138 each coordinate Mg(2+).

This sequence belongs to the RuvC family. In terms of assembly, homodimer which binds Holliday junction (HJ) DNA. The HJ becomes 2-fold symmetrical on binding to RuvC with unstacked arms; it has a different conformation from HJ DNA in complex with RuvA. In the full resolvosome a probable DNA-RuvA(4)-RuvB(12)-RuvC(2) complex forms which resolves the HJ. It depends on Mg(2+) as a cofactor.

The protein resides in the cytoplasm. The enzyme catalyses Endonucleolytic cleavage at a junction such as a reciprocal single-stranded crossover between two homologous DNA duplexes (Holliday junction).. Its function is as follows. The RuvA-RuvB-RuvC complex processes Holliday junction (HJ) DNA during genetic recombination and DNA repair. Endonuclease that resolves HJ intermediates. Cleaves cruciform DNA by making single-stranded nicks across the HJ at symmetrical positions within the homologous arms, yielding a 5'-phosphate and a 3'-hydroxyl group; requires a central core of homology in the junction. The consensus cleavage sequence is 5'-(A/T)TT(C/G)-3'. Cleavage occurs on the 3'-side of the TT dinucleotide at the point of strand exchange. HJ branch migration catalyzed by RuvA-RuvB allows RuvC to scan DNA until it finds its consensus sequence, where it cleaves and resolves the cruciform DNA. The polypeptide is Crossover junction endodeoxyribonuclease RuvC (Burkholderia vietnamiensis (strain G4 / LMG 22486) (Burkholderia cepacia (strain R1808))).